Reading from the N-terminus, the 260-residue chain is MSDPITLNVGGKLYTTSLATLTSFPDSMLGAMFSGKMPTKRDSQGNCFIDRDGKVFRYILNFLRTSHLDLPEDFQEMGLLRREADFYQVQPLIEALQEKEVELSKAEKNAMLNITLKQRVQTVHFTVREAPQIYSLSSSSMEVFNANIFSTSCLFLKLLGSKLLYCSNGNLSSITSHLQDPNHLTLDWVANVEGLPEEEYTKQNLKRLWVVPANKQINSFQVFVEEVLKIALSDGFCIDSSHPHALDFMNNKIIRLIRYR.

The region spanning 3–72 is the BTB domain; that stretch reads DPITLNVGGK…LRTSHLDLPE (70 aa). Positions 88-112 form a coiled coil; that stretch reads QVQPLIEALQEKEVELSKAEKNAML.

As to quaternary structure, homopentamer. Interacts with KCTD11; KCTD21 and KCTD11 may associate in pentameric assemblies. Interacts (via BTB domain) with CUL3; indicative for a participation in a BCR (BTB-CUL3-RBX1) E3 ubiquitin-protein ligase complex. Highly expressed in cerebellum and brain. Expressed in adult cerebellum (at protein level).

It participates in protein modification; protein ubiquitination. Functionally, probable substrate-specific adapter of a BCR (BTB-CUL3-RBX1) E3 ubiquitin-protein ligase complex mediating the ubiquitination and subsequent proteasomal degradation of target proteins. Promotes the ubiquitination of HDAC1. Can function as antagonist of the Hedgehog pathway by affecting the nuclear transfer of transcription factor GLI1; the function probably occurs via HDAC1 down-regulation, keeping GLI1 acetylated and inactive. Inhibits cell growth and tumorigenicity of medulloblastoma (MDB). The chain is BTB/POZ domain-containing protein KCTD21 (Kctd21) from Mus musculus (Mouse).